Here is a 177-residue protein sequence, read N- to C-terminus: Large ribosomal subunit protein uL6 (177 aa).

The disordered stretch occupies residues 151–177 (LRPPEPYKGKGVRYAGENVRRKEGKKK).

This sequence belongs to the universal ribosomal protein uL6 family. Part of the 50S ribosomal subunit.

Functionally, this protein binds to the 23S rRNA, and is important in its secondary structure. It is located near the subunit interface in the base of the L7/L12 stalk, and near the tRNA binding site of the peptidyltransferase center. This is Large ribosomal subunit protein uL6 from Phenylobacterium zucineum (strain HLK1).